The chain runs to 233 residues: Uracil-DNA glycosylase (233 aa).

D70 functions as the Proton acceptor in the catalytic mechanism.

It belongs to the uracil-DNA glycosylase (UDG) superfamily. UNG family.

The protein resides in the cytoplasm. It catalyses the reaction Hydrolyzes single-stranded DNA or mismatched double-stranded DNA and polynucleotides, releasing free uracil.. Functionally, excises uracil residues from the DNA which can arise as a result of misincorporation of dUMP residues by DNA polymerase or due to deamination of cytosine. The chain is Uracil-DNA glycosylase from Helicobacter pylori (strain G27).